The chain runs to 232 residues: 5'-methylthioadenosine/S-adenosylhomocysteine nucleosidase (232 aa).

Glu12 serves as the catalytic Proton acceptor. Substrate contacts are provided by residues Gly78, Ile152, and 173–174; that span reads ME. Residue Asp197 is the Proton donor of the active site.

It belongs to the PNP/UDP phosphorylase family. MtnN subfamily. Homodimer.

It carries out the reaction S-adenosyl-L-homocysteine + H2O = S-(5-deoxy-D-ribos-5-yl)-L-homocysteine + adenine. The enzyme catalyses S-methyl-5'-thioadenosine + H2O = 5-(methylsulfanyl)-D-ribose + adenine. The catalysed reaction is 5'-deoxyadenosine + H2O = 5-deoxy-D-ribose + adenine. Its pathway is amino-acid biosynthesis; L-methionine biosynthesis via salvage pathway; S-methyl-5-thio-alpha-D-ribose 1-phosphate from S-methyl-5'-thioadenosine (hydrolase route): step 1/2. Functionally, catalyzes the irreversible cleavage of the glycosidic bond in both 5'-methylthioadenosine (MTA) and S-adenosylhomocysteine (SAH/AdoHcy) to adenine and the corresponding thioribose, 5'-methylthioribose and S-ribosylhomocysteine, respectively. Also cleaves 5'-deoxyadenosine, a toxic by-product of radical S-adenosylmethionine (SAM) enzymes, into 5-deoxyribose and adenine. Thus, is required for in vivo function of the radical SAM enzymes biotin synthase and lipoic acid synthase, that are inhibited by 5'-deoxyadenosine accumulation. In Erwinia tasmaniensis (strain DSM 17950 / CFBP 7177 / CIP 109463 / NCPPB 4357 / Et1/99), this protein is 5'-methylthioadenosine/S-adenosylhomocysteine nucleosidase.